A 124-amino-acid polypeptide reads, in one-letter code: Small ribosomal subunit protein uS12 (124 aa).

Asp89 bears the 3-methylthioaspartic acid mark. Lys108 is modified (N6-acetyllysine).

Belongs to the universal ribosomal protein uS12 family. In terms of assembly, part of the 30S ribosomal subunit. Contacts proteins S8 and S17. May interact with IF1 in the 30S initiation complex.

Its function is as follows. With S4 and S5 plays an important role in translational accuracy. Functionally, interacts with and stabilizes bases of the 16S rRNA that are involved in tRNA selection in the A site and with the mRNA backbone. Located at the interface of the 30S and 50S subunits, it traverses the body of the 30S subunit contacting proteins on the other side and probably holding the rRNA structure together. The combined cluster of proteins S8, S12 and S17 appears to hold together the shoulder and platform of the 30S subunit. The polypeptide is Small ribosomal subunit protein uS12 (Escherichia coli O6:K15:H31 (strain 536 / UPEC)).